We begin with the raw amino-acid sequence, 211 residues long: Large ribosomal subunit protein bL25 (211 aa).

Disordered regions lie at residues 1-23 and 191-211; these read MAGE…AARQ and LRSA…AEEV. Acidic residues predominate over residues 196-211; that stretch reads NEADEEETEEATAEEV.

The protein belongs to the bacterial ribosomal protein bL25 family. CTC subfamily. In terms of assembly, part of the 50S ribosomal subunit; part of the 5S rRNA/L5/L18/L25 subcomplex. Contacts the 5S rRNA. Binds to the 5S rRNA independently of L5 and L18.

Functionally, this is one of the proteins that binds to the 5S RNA in the ribosome where it forms part of the central protuberance. The chain is Large ribosomal subunit protein bL25 from Dinoroseobacter shibae (strain DSM 16493 / NCIMB 14021 / DFL 12).